A 203-amino-acid chain; its full sequence is Selenocysteine-containing peroxiredoxin PrxU (203 aa).

Positions valine 2–leucine 160 constitute a Thioredoxin domain. The active site involves selenocysteine 47. Selenocysteine 47 is a non-standard amino acid (selenocysteine).

It belongs to the peroxiredoxin family. AhpC/Prx1 subfamily.

The enzyme catalyses a hydroperoxide + [thioredoxin]-dithiol = an alcohol + [thioredoxin]-disulfide + H2O. Its function is as follows. Thiol-specific peroxidase that catalyzes the reduction of hydrogen peroxide and organic hydroperoxides to water and alcohols, respectively. Plays a role in cell protection against oxidative stress by detoxifying peroxides. This Peptoclostridium acidaminophilum (Eubacterium acidaminophilum) protein is Selenocysteine-containing peroxiredoxin PrxU.